Reading from the N-terminus, the 1067-residue chain is DNA-directed RNA polymerase subunit beta (1067 aa).

Belongs to the RNA polymerase beta chain family. As to quaternary structure, in plastids the minimal PEP RNA polymerase catalytic core is composed of four subunits: alpha, beta, beta', and beta''. When a (nuclear-encoded) sigma factor is associated with the core the holoenzyme is formed, which can initiate transcription.

The protein localises to the plastid. It localises to the chloroplast. The catalysed reaction is RNA(n) + a ribonucleoside 5'-triphosphate = RNA(n+1) + diphosphate. Functionally, DNA-dependent RNA polymerase catalyzes the transcription of DNA into RNA using the four ribonucleoside triphosphates as substrates. This Ipomoea purpurea (Common morning glory) protein is DNA-directed RNA polymerase subunit beta.